Consider the following 370-residue polypeptide: Cyclin-A3-4 (370 aa).

This sequence belongs to the cyclin family. Cyclin AB subfamily. As to quaternary structure, interacts with FZR2/CCS52A1, FZR1/CCS52A2 and FZR3/CCS52B.

The sequence is that of Cyclin-A3-4 (CYCA3-4) from Arabidopsis thaliana (Mouse-ear cress).